The primary structure comprises 346 residues: uncharacterized protein (346 aa).

8 helical membrane passes run 15 to 35 (YLRGFALLGIILVNILGLLTV), 55 to 75 (VEARFYPIFSFLFGVGFYLFI), 93 to 113 (ILVLFIFGFIHFLFQPGEALT), 139 to 159 (ILLLFVSIFAAKIFMPLPLIL), 182 to 202 (IFTFFMFILSVGGLLLQYCYV), 229 to 249 (LGVATGPILSAFYAGFLLLLL), 269 to 289 (LTNYISQTALILLAGKLFHLF), and 295 to 315 (LQSLWLCLAIYVIQLIFSAMW).

It to E.coli YeiB, B.subtilis YxaH and B.subtilis YrkO.

Its subcellular location is the cell membrane. Its function is as follows. Involved in transport. This is an uncharacterized protein from Bacillus acidopullulyticus.